Consider the following 114-residue polypeptide: Histone H2B (114 aa).

The disordered stretch occupies residues 1–22; sequence MAKTPSKKAAKAPKKAGSKRNK. At K3 the chain carries N6-acetyllysine. K110 is covalently cross-linked (Glycyl lysine isopeptide (Lys-Gly) (interchain with G-Cter in ubiquitin)).

Belongs to the histone H2B family. As to quaternary structure, the nucleosome is a histone octamer containing two molecules each of H2A, H2B, H3 and H4 assembled in one H3-H4 heterotetramer and two H2A-H2B heterodimers. The octamer wraps approximately 147 bp of DNA. Monoubiquitination of Lys-110 gives a specific tag for epigenetic transcriptional activation and is also prerequisite for histone H3 'Lys-4' and 'Lys-79' methylation.

The protein localises to the nucleus. It localises to the chromosome. In terms of biological role, core component of nucleosome. Nucleosomes wrap and compact DNA into chromatin, limiting DNA accessibility to the cellular machineries which require DNA as a template. Histones thereby play a central role in transcription regulation, DNA repair, DNA replication and chromosomal stability. DNA accessibility is regulated via a complex set of post-translational modifications of histones, also called histone code, and nucleosome remodeling. In Olisthodiscus luteus (Marine phytoflagellate), this protein is Histone H2B.